Here is a 543-residue protein sequence, read N- to C-terminus: Plant intracellular Ras-group-related LRR protein 5 (543 aa).

10 LRR repeats span residues leucine 239–leucine 262, tyrosine 264–glutamate 284, leucine 285–asparagine 307, threonine 309–leucine 331, alanine 332–cysteine 354, serine 356–leucine 377, glutamate 378–leucine 400, arginine 402–threonine 424, leucine 426–leucine 448, and glutamate 449–cysteine 470. The LRR 11; degenerate repeat unit spans residues serine 472–leucine 494. Residues glycine 495–tyrosine 502 carry the GVYW; degenerate motif.

Belongs to the SHOC2 family. Widely expressed.

Functionally, leucine-rich repeat protein that likely mediates protein interactions, possibly in the context of signal transduction. The protein is Plant intracellular Ras-group-related LRR protein 5 (IRL5) of Oryza sativa subsp. japonica (Rice).